A 304-amino-acid polypeptide reads, in one-letter code: Recombination-associated protein RdgC (304 aa).

The protein belongs to the RdgC family.

The protein resides in the cytoplasm. It localises to the nucleoid. Functionally, may be involved in recombination. This chain is Recombination-associated protein RdgC, found in Shewanella baltica (strain OS223).